We begin with the raw amino-acid sequence, 300 residues long: TLR adapter interacting with SLC15A4 on the lysosome (300 aa).

The pLxIS motif signature appears at 289–293; the sequence is SLHIS. Ser-293 bears the Phosphoserine mark.

As to quaternary structure, interacts (via pLxIS motif) with IRF5; leading to IRF5 activation. Interacts with SLC15A4; leading to its recruitment to endolysosome. The phosphorylated pLxIS motif constitutes an IRF5-binding motif, leading to recruitment of the transcription factor IRF5 to induce type-I interferons and other cytokines.

It is found in the lysosome membrane. Its subcellular location is the endosome membrane. The protein resides in the nucleus. It localises to the cytoplasm. Its function is as follows. Innate immune adapter that mediates the recruitment and activation of IRF5 downstream of endolysosomal toll-like receptors TLR7, TLR8 and TLR9. Following recruitment to endolysosome by SLC15A4 downstream of TLR7, TLR8 and TLR9, specifically recruits IRF5 transcription factor via its pLxIS motif, leading to IRF5 activation and subsequent expression of type I interferons. Plays a role in the regulation of endolysosomal pH in immune cells such as B-cells, dendritic cells and monocytes. This Bos taurus (Bovine) protein is TLR adapter interacting with SLC15A4 on the lysosome.